The chain runs to 417 residues: D-galactonate dehydratase family member SeV_A0456 (417 aa).

Positions 43 and 127 each coordinate substrate. Tyr158 acts as the Proton donor/acceptor in catalysis. Asp223 contacts Mg(2+). Catalysis depends on His225, which acts as the Proton donor/acceptor. Glu249 and Glu275 together coordinate Mg(2+). 5 residues coordinate substrate: Glu275, Arg296, His325, Asp329, and Glu352.

This sequence belongs to the mandelate racemase/muconate lactonizing enzyme family. GalD subfamily. Mg(2+) serves as cofactor.

The catalysed reaction is D-gluconate = 2-dehydro-3-deoxy-D-gluconate + H2O. In terms of biological role, has low D-gluconate dehydratase activity (in vitro), suggesting that it has no significant role in D-gluconate degradation in vivo. Has no detectable activity with a panel of 70 other acid sugars (in vitro). This is D-galactonate dehydratase family member SeV_A0456 from Salmonella virchow (strain SL491).